The sequence spans 533 residues: Tyrosine/DOPA decarboxylase 3 (533 aa).

Position 319 is an N6-(pyridoxal phosphate)lysine (K319).

The protein belongs to the group II decarboxylase family. Homodimer. It depends on pyridoxal 5'-phosphate as a cofactor. Roots.

It carries out the reaction L-tyrosine + H(+) = tyramine + CO2. It catalyses the reaction L-dopa + H(+) = dopamine + CO2. The enzyme catalyses 5-hydroxy-L-tryptophan + H(+) = serotonin + CO2. Functionally, marginally higher substrate specificity for L-DOPA over L-tyrosine. The protein is Tyrosine/DOPA decarboxylase 3 (TYDC3) of Papaver somniferum (Opium poppy).